We begin with the raw amino-acid sequence, 250 residues long: 2,3-bisphosphoglycerate-dependent phosphoglycerate mutase (250 aa).

Substrate is bound by residues 10–17 (RHGESQWN), 23–24 (TG), R62, 89–92 (ERHY), K100, 116–117 (RR), and 185–186 (GN). Residue H11 is the Tele-phosphohistidine intermediate of the active site. E89 (proton donor/acceptor) is an active-site residue.

It belongs to the phosphoglycerate mutase family. BPG-dependent PGAM subfamily. As to quaternary structure, homodimer.

The enzyme catalyses (2R)-2-phosphoglycerate = (2R)-3-phosphoglycerate. The protein operates within carbohydrate degradation; glycolysis; pyruvate from D-glyceraldehyde 3-phosphate: step 3/5. In terms of biological role, catalyzes the interconversion of 2-phosphoglycerate and 3-phosphoglycerate. This Pectobacterium atrosepticum (strain SCRI 1043 / ATCC BAA-672) (Erwinia carotovora subsp. atroseptica) protein is 2,3-bisphosphoglycerate-dependent phosphoglycerate mutase.